Consider the following 271-residue polypeptide: Keratin-associated protein 10-5 (271 aa).

Repeat copies occupy residues 26-30 (CCEPP), 51-55 (CCQAA), 73-77 (CCQPA), 78-82 (CCASS), 88-92 (CCVPV), 93-97 (CCKPV), 98-102 (CCLPT), 110-114 (CCQQS), 120-124 (CCASS), 130-134 (CCVPV), 135-139 (CCKPV), 140-144 (CCVPT), 152-156 (CCQHS), 162-166 (CCTSS), 177-181 (CCKPV), 187-191 (CCVPV), 199-203 (CCQQS), 209-213 (CCTTS), 214-218 (CCRPS), 233-237 (CCLPI), 240-244 (CCAPA), and 251-255 (CCRPA). Residues 26 to 255 (CCEPPCGTAP…SYQASCCRPA (230 aa)) are 22 X 5 AA repeats of C-C-X(3).

This sequence belongs to the KRTAP type 10 family. Interacts with hair keratins. As to expression, restricted to a narrow region of the hair fiber cuticle, lying approximately 20 cell layers above the apex of the dermal papilla of the hair root; not detected in any other tissues.

In the hair cortex, hair keratin intermediate filaments are embedded in an interfilamentous matrix, consisting of hair keratin-associated proteins (KRTAP), which are essential for the formation of a rigid and resistant hair shaft through their extensive disulfide bond cross-linking with abundant cysteine residues of hair keratins. The matrix proteins include the high-sulfur and high-glycine-tyrosine keratins. The polypeptide is Keratin-associated protein 10-5 (KRTAP10-5) (Homo sapiens (Human)).